Consider the following 486-residue polypeptide: tRNA sulfurtransferase (486 aa).

Residues 63-167 enclose the THUMP domain; sequence DAFAERLGCI…HEKLYMVVRR (105 aa). ATP-binding positions include 185 to 186, lysine 267, glycine 289, and glutamine 298; that span reads LI. A disulfide bridge connects residues cysteine 346 and cysteine 460. Residues 408–486 form the Rhodanese domain; the sequence is VDTQEVVIDI…GYTNVKVYRP (79 aa). Cysteine 460 (cysteine persulfide intermediate) is an active-site residue.

Belongs to the ThiI family.

It is found in the cytoplasm. The catalysed reaction is [ThiI sulfur-carrier protein]-S-sulfanyl-L-cysteine + a uridine in tRNA + 2 reduced [2Fe-2S]-[ferredoxin] + ATP + H(+) = [ThiI sulfur-carrier protein]-L-cysteine + a 4-thiouridine in tRNA + 2 oxidized [2Fe-2S]-[ferredoxin] + AMP + diphosphate. It catalyses the reaction [ThiS sulfur-carrier protein]-C-terminal Gly-Gly-AMP + S-sulfanyl-L-cysteinyl-[cysteine desulfurase] + AH2 = [ThiS sulfur-carrier protein]-C-terminal-Gly-aminoethanethioate + L-cysteinyl-[cysteine desulfurase] + A + AMP + 2 H(+). The protein operates within cofactor biosynthesis; thiamine diphosphate biosynthesis. Its function is as follows. Catalyzes the ATP-dependent transfer of a sulfur to tRNA to produce 4-thiouridine in position 8 of tRNAs, which functions as a near-UV photosensor. Also catalyzes the transfer of sulfur to the sulfur carrier protein ThiS, forming ThiS-thiocarboxylate. This is a step in the synthesis of thiazole, in the thiamine biosynthesis pathway. The sulfur is donated as persulfide by IscS. This is tRNA sulfurtransferase from Shewanella denitrificans (strain OS217 / ATCC BAA-1090 / DSM 15013).